The chain runs to 190 residues: Protein GrpE (190 aa).

The segment covering 1-31 (MTEEQKKYEDAENLESKSENPEEASAEKSEN) has biased composition (basic and acidic residues). A disordered region spans residues 1–39 (MTEEQKKYEDAENLESKSENPEEASAEKSENGVEDLQAE).

The protein belongs to the GrpE family. In terms of assembly, homodimer.

The protein resides in the cytoplasm. Participates actively in the response to hyperosmotic and heat shock by preventing the aggregation of stress-denatured proteins, in association with DnaK and GrpE. It is the nucleotide exchange factor for DnaK and may function as a thermosensor. Unfolded proteins bind initially to DnaJ; upon interaction with the DnaJ-bound protein, DnaK hydrolyzes its bound ATP, resulting in the formation of a stable complex. GrpE releases ADP from DnaK; ATP binding to DnaK triggers the release of the substrate protein, thus completing the reaction cycle. Several rounds of ATP-dependent interactions between DnaJ, DnaK and GrpE are required for fully efficient folding. This Zymomonas mobilis subsp. mobilis (strain ATCC 31821 / ZM4 / CP4) protein is Protein GrpE.